The following is a 371-amino-acid chain: Cytochrome b (371 aa).

Transmembrane regions (helical) follow at residues 25–45 (FGSM…FLAV), 69–90 (WMMQ…YIHI), 105–125 (WLSG…XXXX), and 170–190 (XXXX…LHIM). Heme b-binding residues include His-75 and His-89. 2 residues coordinate heme b: Xaa-174 and His-188. His-193 contacts a ubiquinone. The next 4 membrane-spanning stretches (helical) occupy residues 218–238 (YKDL…VSFL), 280–300 (LGGA…PFTH), 312–332 (IMQL…WAAT), and 339–358 (FTMI…ITNP).

The protein belongs to the cytochrome b family. The cytochrome bc1 complex contains 3 respiratory subunits (MT-CYB, CYC1 and UQCRFS1), 2 core proteins (UQCRC1 and UQCRC2) and probably 6 low-molecular weight proteins. Requires heme b as cofactor.

The protein localises to the mitochondrion inner membrane. Functionally, component of the ubiquinol-cytochrome c reductase complex (complex III or cytochrome b-c1 complex) that is part of the mitochondrial respiratory chain. The b-c1 complex mediates electron transfer from ubiquinol to cytochrome c. Contributes to the generation of a proton gradient across the mitochondrial membrane that is then used for ATP synthesis. This Eryx jaculus (Javelin sand boa) protein is Cytochrome b (MT-CYB).